Here is a 128-residue protein sequence, read N- to C-terminus: Myelin basic protein (128 aa).

Disordered regions lie at residues 1-24 (AGGAHFFGQEGSRKVPEKGKEPAT) and 82-128 (TDGQ…PARR). 2 stretches are compositionally biased toward basic and acidic residues: residues 11–23 (GSRKVPEKGKEPA) and 96–107 (KSREAYRGRKDG).

This sequence belongs to the myelin basic protein family. Post-translationally, the N-terminus is blocked.

It localises to the myelin membrane. Functionally, this protein may function to maintain proper structure of myelin. The protein is Myelin basic protein (MBP) of Carcharhinus obscurus (Dusky shark).